The sequence spans 166 residues: Large ribosomal subunit protein uL10 (166 aa).

It belongs to the universal ribosomal protein uL10 family. Part of the ribosomal stalk of the 50S ribosomal subunit. The N-terminus interacts with L11 and the large rRNA to form the base of the stalk. The C-terminus forms an elongated spine to which L12 dimers bind in a sequential fashion forming a multimeric L10(L12)X complex.

Functionally, forms part of the ribosomal stalk, playing a central role in the interaction of the ribosome with GTP-bound translation factors. The sequence is that of Large ribosomal subunit protein uL10 from Shewanella woodyi (strain ATCC 51908 / MS32).